Here is a 121-residue protein sequence, read N- to C-terminus: Small ribosomal subunit protein uS13 (121 aa).

Residues 97–121 (PVRGQKTHSNARTRKGPRASRIKKK) are disordered. Residues 101 to 121 (QKTHSNARTRKGPRASRIKKK) are compositionally biased toward basic residues.

It belongs to the universal ribosomal protein uS13 family. In terms of assembly, part of the 30S ribosomal subunit. Forms a loose heterodimer with protein S19. Forms two bridges to the 50S subunit in the 70S ribosome.

Functionally, located at the top of the head of the 30S subunit, it contacts several helices of the 16S rRNA. In the 70S ribosome it contacts the 23S rRNA (bridge B1a) and protein L5 of the 50S subunit (bridge B1b), connecting the 2 subunits; these bridges are implicated in subunit movement. Contacts the tRNAs in the A and P-sites. This Kosmotoga olearia (strain ATCC BAA-1733 / DSM 21960 / TBF 19.5.1) protein is Small ribosomal subunit protein uS13.